We begin with the raw amino-acid sequence, 206 residues long: Large ribosomal subunit protein uL4 (206 aa).

The protein belongs to the universal ribosomal protein uL4 family. As to quaternary structure, part of the 50S ribosomal subunit.

One of the primary rRNA binding proteins, this protein initially binds near the 5'-end of the 23S rRNA. It is important during the early stages of 50S assembly. It makes multiple contacts with different domains of the 23S rRNA in the assembled 50S subunit and ribosome. Functionally, forms part of the polypeptide exit tunnel. The protein is Large ribosomal subunit protein uL4 of Rhodopseudomonas palustris (strain BisB18).